The following is a 112-amino-acid chain: Hydrogenase maturation factor HypA (112 aa).

His2 serves as a coordination point for Ni(2+). Residues Cys73, Cys76, Cys88, and Cys91 each contribute to the Zn(2+) site.

It belongs to the HypA/HybF family.

In terms of biological role, involved in the maturation of [NiFe] hydrogenases. Required for nickel insertion into the metal center of the hydrogenase. The sequence is that of Hydrogenase maturation factor HypA from Synechococcus elongatus (strain ATCC 33912 / PCC 7942 / FACHB-805) (Anacystis nidulans R2).